We begin with the raw amino-acid sequence, 805 residues long: DNA gyrase subunit B (805 aa).

Residues 431–546 (CEMYIVEGDS…NECVYIAQPP (116 aa)) enclose the Toprim domain. Residues Glu437, Asp511, and Asp513 each contribute to the Mg(2+) site.

The protein belongs to the type II topoisomerase GyrB family. In terms of assembly, heterotetramer, composed of two GyrA and two GyrB chains. In the heterotetramer, GyrA contains the active site tyrosine that forms a transient covalent intermediate with DNA, while GyrB binds cofactors and catalyzes ATP hydrolysis. Mg(2+) is required as a cofactor. The cofactor is Mn(2+). Requires Ca(2+) as cofactor.

Its subcellular location is the cytoplasm. The enzyme catalyses ATP-dependent breakage, passage and rejoining of double-stranded DNA.. In terms of biological role, a type II topoisomerase that negatively supercoils closed circular double-stranded (ds) DNA in an ATP-dependent manner to modulate DNA topology and maintain chromosomes in an underwound state. Negative supercoiling favors strand separation, and DNA replication, transcription, recombination and repair, all of which involve strand separation. Also able to catalyze the interconversion of other topological isomers of dsDNA rings, including catenanes and knotted rings. Type II topoisomerases break and join 2 DNA strands simultaneously in an ATP-dependent manner. The sequence is that of DNA gyrase subunit B from Chlamydia pneumoniae (Chlamydophila pneumoniae).